The sequence spans 211 residues: LexA repressor (211 aa).

A DNA-binding region (H-T-H motif) is located at residues 27-47 (QTEIARAFGFKGVRAVQHHLD). Catalysis depends on for autocatalytic cleavage activity residues serine 131 and lysine 168.

Belongs to the peptidase S24 family. In terms of assembly, homodimer.

The catalysed reaction is Hydrolysis of Ala-|-Gly bond in repressor LexA.. Functionally, represses a number of genes involved in the response to DNA damage (SOS response), including recA and lexA. In the presence of single-stranded DNA, RecA interacts with LexA causing an autocatalytic cleavage which disrupts the DNA-binding part of LexA, leading to derepression of the SOS regulon and eventually DNA repair. In Xylella fastidiosa (strain M23), this protein is LexA repressor.